An 809-amino-acid polypeptide reads, in one-letter code: TLR4 interactor with leucine rich repeats (809 aa).

An N-terminal signal peptide occupies residues methionine 1–serine 25. The LRRNT domain maps to valine 26–serine 57. Residues valine 26–glutamine 694 are Extracellular-facing. LRR repeat units follow at residues valine 61–arginine 81, glutamine 84–lysine 105, arginine 108–proline 129, lysine 132–glycine 153, serine 156–proline 177, asparagine 180–glutamine 201, lysine 204–alanine 223, serine 230–histidine 251, arginine 254–glycine 275, alanine 278–glutamate 298, serine 302–histidine 323, and arginine 326–alanine 347. The N-linked (GlcNAc...) asparagine glycan is linked to asparagine 73. Positions asparagine 359–aspartate 416 constitute an LRRCT domain. N-linked (GlcNAc...) asparagine glycosylation occurs at asparagine 411. Disordered stretches follow at residues glycine 412–leucine 462 and arginine 483–glutamine 563. Polar residues predominate over residues proline 421–glutamate 436. Positions glycine 488–serine 506 are enriched in low complexity. A compositionally biased stretch (polar residues) spans alanine 521 to aspartate 543. Over residues alanine 554–glutamine 563 the composition is skewed to low complexity. Asparagine 587 carries an N-linked (GlcNAc...) asparagine glycan. A helical membrane pass occupies residues leucine 695–tryptophan 715. At glycine 716–aspartate 809 the chain is on the cytoplasmic side. Phosphoserine is present on serine 796.

In terms of assembly, belongs to the lipopolysaccharide (LPS) receptor, a multi-protein complex containing at least CD14, MD-2 and TLR4. Interacts with TLR4; this interaction is greatly enhanced by LPS stimulation. Interacts with LPS. In terms of processing, N-glycolysaled. In terms of tissue distribution, highly expressed in brain, spinal cord and lung.

Its subcellular location is the membrane. Component of the TLR4 signaling complex. Mediates the innate immune response to bacterial lipopolysaccharide (LPS) leading to cytokine secretion. This is TLR4 interactor with leucine rich repeats (Tril) from Mus musculus (Mouse).